The following is a 486-amino-acid chain: Cobyric acid synthase (486 aa).

Residues 248-439 (MLRVVVPVLP…VHGLFDTPAA (192 aa)) enclose the GATase cobBQ-type domain. C329 acts as the Nucleophile in catalysis. The active site involves H431.

It belongs to the CobB/CobQ family. CobQ subfamily.

The protein operates within cofactor biosynthesis; adenosylcobalamin biosynthesis. Functionally, catalyzes amidations at positions B, D, E, and G on adenosylcobyrinic A,C-diamide. NH(2) groups are provided by glutamine, and one molecule of ATP is hydrogenolyzed for each amidation. The sequence is that of Cobyric acid synthase from Paraburkholderia phytofirmans (strain DSM 17436 / LMG 22146 / PsJN) (Burkholderia phytofirmans).